Reading from the N-terminus, the 109-residue chain is Membrane-bound lysozyme inhibitor of C-type lysozyme (109 aa).

The signal sequence occupies residues 1–17 (MTMKKLLIIILPVLLSG). The N-palmitoyl cysteine moiety is linked to residue Cys18. Cys18 carries S-diacylglycerol cysteine lipidation. Cys37 and Cys102 are joined by a disulfide.

The protein belongs to the MliC family. Type 1 subfamily. Monomer.

The protein localises to the cell outer membrane. Its function is as follows. Specifically inhibits C-type lysozymes. The chain is Membrane-bound lysozyme inhibitor of C-type lysozyme from Escherichia coli (strain K12).